The primary structure comprises 402 residues: Alkaline proteinase (402 aa).

Residues Met-1–Ala-20 form the signal peptide. Positions Pro-21–Ala-120 are excised as a propeptide. One can recognise an Inhibitor I9 domain in the interval Lys-32–Leu-108. The Peptidase S8 domain occupies Ala-128 to Ala-402. Catalysis depends on charge relay system residues Asp-160, His-191, and Ser-347. Residues Gly-382–Pro-392 are compositionally biased toward polar residues. Residues Gly-382–Ala-402 are disordered.

This sequence belongs to the peptidase S8 family.

The sequence is that of Alkaline proteinase (ALP) from Hapsidospora chrysogena (Acremonium chrysogenum).